Reading from the N-terminus, the 283-residue chain is Pantothenate synthetase (283 aa).

31–38 (MGALHDGH) contributes to the ATP binding site. H38 (proton donor) is an active-site residue. Position 62 (Q62) interacts with (R)-pantoate. Q62 lines the beta-alanine pocket. 148 to 151 (GKKD) contacts ATP. Q154 provides a ligand contact to (R)-pantoate. ATP is bound by residues V177 and 185-188 (KSSR).

The protein belongs to the pantothenate synthetase family. Homodimer.

Its subcellular location is the cytoplasm. The catalysed reaction is (R)-pantoate + beta-alanine + ATP = (R)-pantothenate + AMP + diphosphate + H(+). It participates in cofactor biosynthesis; (R)-pantothenate biosynthesis; (R)-pantothenate from (R)-pantoate and beta-alanine: step 1/1. In terms of biological role, catalyzes the condensation of pantoate with beta-alanine in an ATP-dependent reaction via a pantoyl-adenylate intermediate. This is Pantothenate synthetase from Staphylococcus aureus (strain USA300).